The chain runs to 799 residues: MYNHNLVEKKWRKIWKDSNLHTFKDNLKKPKFYALDMFPYPSGAGLHMGHVKSYTPTDVYARFKRYQGYSVLHPMGWDAFGLPAEQFALATKNHPATFTDQNINNFKLQIDQLGFWFDWNKEVNTTDPNFYKWTQWIFIKLFENGLAEIKDIDVNWCQELGTVLANEEVLTDEKGNKVSERGKYPVIKKPMKQWVLKITKFADQLIDDLELTDWTVGLKNIQKKWIGKSIGATVKFKIQNSDSEIEVFTSRPDTIFGVSFIGLSSDHELVLKEKTKNKKIEAFLNELSSLKEYERTAINVEKKGVLLDIKAIHPITKQLVPVYVCNYVLSNYGNGAIMGVPAGDKRDYDFAKLFNLEIKEIIKDHPAPYEEDGIHINSDFLNGLNNEDAIAKIVEYLEKNKIGKKQVNYKLKDWLFSRQRYWGEPFPVLFDEKGNIIVEKNLPLLLPETNDIKPSGTGESPLANLTEWVNVKIDSKLYRRETNTMPQWAGSCWYYLAYLLKDGDSYLPLDSKQAYEIFKRWLPVDIYIGGQEHAVLHLLYARFWHKFLHQINVVPNKEPFYKIINQGMILVNGEKMSKSKGNVVNPSDFVVSHGADALRLYMMFMGPITASLPWEESGIDGMYKWVQRVYRLFETKQIDKNFNDENLEKKYHQFVKKASEFMENFDFNLVISEMMIFINECYKYEKINYDYMLNFCVILSCFAPFITEEINEVFLKNKKFISDNLWPKYDEKKIVETTIKIPVQINGKIREVLEINLGATQKDVVDLAIKNEKIIKWIENKKIVKEIYIENKILNLIIK.

Positions 39-50 match the 'HIGH' region motif; that stretch reads PYPSGAGLHMGH. Positions 575–579 match the 'KMSKS' region motif; that stretch reads KMSKS. Position 578 (Lys578) interacts with ATP.

This sequence belongs to the class-I aminoacyl-tRNA synthetase family.

It localises to the cytoplasm. The enzyme catalyses tRNA(Leu) + L-leucine + ATP = L-leucyl-tRNA(Leu) + AMP + diphosphate. The polypeptide is Leucine--tRNA ligase (Malacoplasma penetrans (strain HF-2) (Mycoplasma penetrans)).